We begin with the raw amino-acid sequence, 205 residues long: Beta-crystallin B2 (205 aa).

A2 bears the N-acetylalanine mark. An N-terminal arm region spans residues A2 to N16. Beta/gamma crystallin 'Greek key' domains lie at P17–A56 and G57–K101. Residues V102–E106 are connecting peptide. 2 Beta/gamma crystallin 'Greek key' domains span residues H107–S148 and G149–R191. Residues M193 to S205 form a C-terminal arm region.

This sequence belongs to the beta/gamma-crystallin family. Homo/heterodimer, or complexes of higher-order. The structure of beta-crystallin oligomers seems to be stabilized through interactions between the N-terminal arms.

Functionally, crystallins are the dominant structural components of the vertebrate eye lens. In Mesocricetus auratus (Golden hamster), this protein is Beta-crystallin B2 (CRYBB2).